Reading from the N-terminus, the 356-residue chain is MTKENICIVFGGKSAEHEVSILTAQNVLNAIDKDKYHVDIIYITNDGDWRKQNNITAEIKSTDELHLENGEALEISQLLKESSSGQPYDAVFPLLHGPNGEDGTIQGLFEVLDVPYVGNGVLSAASSMDKLVMKQLFEHRGLPQLPYISFLRSEYEKYEHNILKLVNDKLNYPVFVKPANLGSSVGISKCNNEAELKEGIKEAFQFDRKLVIEQGVNAREIEVAVLGNDYPEATWPGEVVKDVAFYDYKSKYKDGKVQLQIPADLDEDVQLTLRNMALEAFKATDCSGLVRADFFVTEDNQIYINETNAMPGFTAFSMYPKLWENMGLSYPELITKLIELAKERHQDKQKNKYKID.

In terms of domain architecture, ATP-grasp spans 134–339; that stretch reads KQLFEHRGLP…YPELITKLIE (206 aa). Residue 167–222 coordinates ATP; that stretch reads NDKLNYPVFVKPANLGSSVGISKCNNEAELKEGIKEAFQFDRKLVIEQGVNAREIE. Mg(2+) is bound by residues Asp293, Glu306, and Asn308.

It belongs to the D-alanine--D-alanine ligase family. Mg(2+) serves as cofactor. Mn(2+) is required as a cofactor.

The protein resides in the cytoplasm. The catalysed reaction is 2 D-alanine + ATP = D-alanyl-D-alanine + ADP + phosphate + H(+). It functions in the pathway cell wall biogenesis; peptidoglycan biosynthesis. Functionally, cell wall formation. The protein is D-alanine--D-alanine ligase of Staphylococcus aureus (strain Mu3 / ATCC 700698).